We begin with the raw amino-acid sequence, 89 residues long: Small ribosomal subunit protein uS15 (89 aa).

The protein belongs to the universal ribosomal protein uS15 family. As to quaternary structure, part of the 30S ribosomal subunit. Forms a bridge to the 50S subunit in the 70S ribosome, contacting the 23S rRNA.

Functionally, one of the primary rRNA binding proteins, it binds directly to 16S rRNA where it helps nucleate assembly of the platform of the 30S subunit by binding and bridging several RNA helices of the 16S rRNA. In terms of biological role, forms an intersubunit bridge (bridge B4) with the 23S rRNA of the 50S subunit in the ribosome. The polypeptide is Small ribosomal subunit protein uS15 (Thermomicrobium roseum (strain ATCC 27502 / DSM 5159 / P-2)).